A 271-amino-acid chain; its full sequence is Putative cysteine protease YopT-like blr2140 (271 aa).

Residues 1–81 (MYDRIGGSST…STSSPESPAT (81 aa)) are disordered. Over residues 7–29 (GSSTRTSQTDEPSQSVDSGSFTE) the composition is skewed to polar residues. The span at 65-81 (TSSASEPSTSSPESPAT) shows a compositional bias: low complexity. The active site involves Cys100. Residues 114–136 (SPSTRMSALTPGSQTHASAAERQ) are disordered. Residues His213 and Asp228 contribute to the active site.

It belongs to the peptidase C58 family.

In terms of biological role, potential cysteine protease, which may play a central role after invasion of host cell. This is Putative cysteine protease YopT-like blr2140 from Bradyrhizobium diazoefficiens (strain JCM 10833 / BCRC 13528 / IAM 13628 / NBRC 14792 / USDA 110).